The primary structure comprises 968 residues: Glycine dehydrogenase (decarboxylating) (968 aa).

Lysine 713 carries the N6-(pyridoxal phosphate)lysine modification.

It belongs to the GcvP family. The glycine cleavage system is composed of four proteins: P, T, L and H. It depends on pyridoxal 5'-phosphate as a cofactor.

It catalyses the reaction N(6)-[(R)-lipoyl]-L-lysyl-[glycine-cleavage complex H protein] + glycine + H(+) = N(6)-[(R)-S(8)-aminomethyldihydrolipoyl]-L-lysyl-[glycine-cleavage complex H protein] + CO2. Its function is as follows. The glycine cleavage system catalyzes the degradation of glycine. The P protein binds the alpha-amino group of glycine through its pyridoxal phosphate cofactor; CO(2) is released and the remaining methylamine moiety is then transferred to the lipoamide cofactor of the H protein. This Variovorax paradoxus (strain S110) protein is Glycine dehydrogenase (decarboxylating).